Reading from the N-terminus, the 1101-residue chain is Rho guanine nucleotide exchange factor gef2 (1101 aa).

Positions 203–222 (EDSRKKTSSPSPSFASSKDA) are disordered. Positions 210 to 219 (SSPSPSFASS) are enriched in low complexity. Residues 230-428 (KKKSLLIEMM…KNIAEMPTVD (199 aa)) enclose the DH domain. Residues Ser736 and Ser977 each carry the phosphoserine modification.

It localises to the cytoplasm. The protein localises to the cytoskeleton. It is found in the microtubule organizing center. The protein resides in the spindle pole body. Its function is as follows. Has a role in the control of cell polarity and cytokinesis. Involved in bipolar growth and septum formation. The chain is Rho guanine nucleotide exchange factor gef2 (gef2) from Schizosaccharomyces pombe (strain 972 / ATCC 24843) (Fission yeast).